A 400-amino-acid polypeptide reads, in one-letter code: MTQFASPVLHTLLDTDAYKLHMQQAVFHHYYDVQVAAEFRCRGDDLLGIYADSIREQVDAMQHLALQDDEYQWLSGLPFFKADYLDWLRDFRFNPEQVTITNDNGKLNIRLAGPWREVIMWEVPLLAVISEIVHRYRSPEMGVEHALATLESKLGEFAQMTESVDMSRFRLMDFGTRRRFSREVQQAIVKRLQQEPWFVGTSNYDLARRRNLTPMGTQAHEWFQAHQQISPDLATSQRAALAAWLEEYPDQLGIALTDCITMDAFLRDFGPEFAQRYQGLRHDSGDPVEWGEKAIAHYKKLGIDPLTKVLVFSDNLDLSKALELYRHFSARVNLSFGIGTRLTCDIPQVKPLNIVIKLVECNGKPVAKLSDSPGKTICHDKAFVRALRKAFDLPQIKKAS.

H220 is subject to Phosphohistidine; by autocatalysis.

It belongs to the NAPRTase family. In terms of processing, transiently phosphorylated on a His residue during the reaction cycle. Phosphorylation strongly increases the affinity for substrates and increases the rate of nicotinate D-ribonucleotide production. Dephosphorylation regenerates the low-affinity form of the enzyme, leading to product release.

It carries out the reaction nicotinate + 5-phospho-alpha-D-ribose 1-diphosphate + ATP + H2O = nicotinate beta-D-ribonucleotide + ADP + phosphate + diphosphate. Its pathway is cofactor biosynthesis; NAD(+) biosynthesis; nicotinate D-ribonucleotide from nicotinate: step 1/1. Functionally, catalyzes the synthesis of beta-nicotinate D-ribonucleotide from nicotinate and 5-phospho-D-ribose 1-phosphate at the expense of ATP. In Enterobacter sp. (strain 638), this protein is Nicotinate phosphoribosyltransferase.